The sequence spans 74 residues: Insertion element IS986 uncharacterized 8.2 kDa protein (74 aa).

The protein is Insertion element IS986 uncharacterized 8.2 kDa protein of Mycobacterium tuberculosis.